The primary structure comprises 334 residues: Glyceraldehyde-3-phosphate dehydrogenase (334 aa).

NAD(+) contacts are provided by residues 12–13 and glycine 111; that span reads TI. Residue 140 to 142 participates in D-glyceraldehyde 3-phosphate binding; sequence SCN. Cysteine 141 serves as the catalytic Nucleophile. Arginine 167 contacts NAD(+). 192-193 contributes to the D-glyceraldehyde 3-phosphate binding site; the sequence is HG. Glutamine 298 is an NAD(+) binding site.

It belongs to the glyceraldehyde-3-phosphate dehydrogenase family. In terms of assembly, homotetramer.

The protein localises to the encapsulin nanocompartment. It catalyses the reaction D-glyceraldehyde 3-phosphate + phosphate + NADP(+) = (2R)-3-phospho-glyceroyl phosphate + NADPH + H(+). The catalysed reaction is D-glyceraldehyde 3-phosphate + phosphate + NAD(+) = (2R)-3-phospho-glyceroyl phosphate + NADH + H(+). It participates in carbohydrate degradation; glycolysis; pyruvate from D-glyceraldehyde 3-phosphate: step 1/5. In terms of biological role, possible cargo protein of a type 4B encapsulin nanocompartment. Active in the presence of NAD and NADP, prefers NADP. The protein is Glyceraldehyde-3-phosphate dehydrogenase (gap) of Pyrococcus furiosus (strain ATCC 43587 / DSM 3638 / JCM 8422 / Vc1).